Reading from the N-terminus, the 455-residue chain is MWGGRFSAKPAELMQAINVSIGFDKRLWAQDLAGSRAHARMLISQGVIARDDGEEILKGLDAIEGEIVAGAFPFRDEYEDIHMNIEARLRELIGPTAGRLHTARSRNDQVAVDFRLWVREACDRSAAQLEALQKALVAQAEQYADALMPGFTHLQPAQPVTFGHHLMAYVEMFGRDASRFRDARVRMNECPLGAAALAGSPFPIDRHATAASLGFDRPTANSLDSVSARDFALEALSAASICATHLSRLAEEIVLWTTPMFGFVKLTDAFTTGSSIMPQKKNPDAAELVRAKVGRILGSLTTLTVVMKGLPLAYSKDMQEDKVPTFEAFDALELSLLAMAGMVSDLTPNTEKMAAAAGAGFSTATDLADWLVRELNMPFRDAHHVTGSAVKAAETLGVDLAELSLADLRAIEPRITSDIYTVLTPAASAASRISYGGTAPAQVRAQIARWKELLG.

This sequence belongs to the lyase 1 family. Argininosuccinate lyase subfamily.

Its subcellular location is the cytoplasm. The catalysed reaction is 2-(N(omega)-L-arginino)succinate = fumarate + L-arginine. The protein operates within amino-acid biosynthesis; L-arginine biosynthesis; L-arginine from L-ornithine and carbamoyl phosphate: step 3/3. This chain is Argininosuccinate lyase, found in Caulobacter sp. (strain K31).